Reading from the N-terminus, the 282-residue chain is Putative phosphite transport system permease protein HtxC (282 aa).

Transmembrane regions (helical) follow at residues 23 to 43, 81 to 101, 130 to 150, and 239 to 259; these read HFAT…VCQI, LAMA…LALM, VYAL…VLAI, and FNKM…IDFI. Residues 77-260 form the ABC transmembrane type-1 domain; sequence AGETLAMATI…LMVSAIDFIS (184 aa).

This sequence belongs to the binding-protein-dependent transport system permease family.

It localises to the cell inner membrane. Functionally, probably forms part of a binding-protein-dependent hypophosphite transporter. The chain is Putative phosphite transport system permease protein HtxC (htxC) from Stutzerimonas stutzeri (Pseudomonas stutzeri).